The primary structure comprises 431 residues: tRNA-2-methylthio-N(6)-dimethylallyladenosine synthase (431 aa).

The 117-residue stretch at 4 to 120 (RAVYIKTFGC…IENIIENQVS (117 aa)) folds into the MTTase N-terminal domain. [4Fe-4S] cluster is bound by residues cysteine 13, cysteine 49, cysteine 83, cysteine 154, cysteine 158, and cysteine 161. Residues 140–367 (RKDCVKAWVN…LKLQDEITER (228 aa)) form the Radical SAM core domain. The TRAM domain occupies 370–430 (KRLEGKIQEV…RHSLEGDIIS (61 aa)).

The protein belongs to the methylthiotransferase family. MiaB subfamily. In terms of assembly, monomer. Requires [4Fe-4S] cluster as cofactor.

The protein localises to the cytoplasm. The enzyme catalyses N(6)-dimethylallyladenosine(37) in tRNA + (sulfur carrier)-SH + AH2 + 2 S-adenosyl-L-methionine = 2-methylsulfanyl-N(6)-dimethylallyladenosine(37) in tRNA + (sulfur carrier)-H + 5'-deoxyadenosine + L-methionine + A + S-adenosyl-L-homocysteine + 2 H(+). In terms of biological role, catalyzes the methylthiolation of N6-(dimethylallyl)adenosine (i(6)A), leading to the formation of 2-methylthio-N6-(dimethylallyl)adenosine (ms(2)i(6)A) at position 37 in tRNAs that read codons beginning with uridine. This is tRNA-2-methylthio-N(6)-dimethylallyladenosine synthase from Thermodesulfovibrio yellowstonii (strain ATCC 51303 / DSM 11347 / YP87).